A 608-amino-acid polypeptide reads, in one-letter code: 1-deoxy-D-xylulose-5-phosphate synthase (608 aa).

Thiamine diphosphate contacts are provided by residues His-66 and 107 to 109 (GHA). Asp-138 contributes to the Mg(2+) binding site. Thiamine diphosphate-binding positions include 139 to 140 (GA), Asn-167, Phe-277, and Glu-350. Asn-167 provides a ligand contact to Mg(2+).

The protein belongs to the transketolase family. DXPS subfamily. In terms of assembly, homodimer. It depends on Mg(2+) as a cofactor. Requires thiamine diphosphate as cofactor.

It carries out the reaction D-glyceraldehyde 3-phosphate + pyruvate + H(+) = 1-deoxy-D-xylulose 5-phosphate + CO2. It participates in metabolic intermediate biosynthesis; 1-deoxy-D-xylulose 5-phosphate biosynthesis; 1-deoxy-D-xylulose 5-phosphate from D-glyceraldehyde 3-phosphate and pyruvate: step 1/1. Functionally, catalyzes the acyloin condensation reaction between C atoms 2 and 3 of pyruvate and glyceraldehyde 3-phosphate to yield 1-deoxy-D-xylulose-5-phosphate (DXP). The chain is 1-deoxy-D-xylulose-5-phosphate synthase from Thermotoga sp. (strain RQ2).